The primary structure comprises 197 residues: Peptidyl-tRNA hydrolase (197 aa).

Position 23 (Y23) interacts with tRNA. Catalysis depends on H28, which acts as the Proton acceptor. 3 residues coordinate tRNA: F73, N75, and N121.

Belongs to the PTH family. Monomer.

The protein resides in the cytoplasm. The catalysed reaction is an N-acyl-L-alpha-aminoacyl-tRNA + H2O = an N-acyl-L-amino acid + a tRNA + H(+). Its function is as follows. Hydrolyzes ribosome-free peptidyl-tRNAs (with 1 or more amino acids incorporated), which drop off the ribosome during protein synthesis, or as a result of ribosome stalling. In terms of biological role, catalyzes the release of premature peptidyl moieties from peptidyl-tRNA molecules trapped in stalled 50S ribosomal subunits, and thus maintains levels of free tRNAs and 50S ribosomes. The chain is Peptidyl-tRNA hydrolase from Frankia casuarinae (strain DSM 45818 / CECT 9043 / HFP020203 / CcI3).